A 234-amino-acid chain; its full sequence is Phosphoribosylformylglycinamidine synthase subunit PurQ (234 aa).

A Glutamine amidotransferase type-1 domain is found at 3–231 (AAVVVFPGSN…ALYLERRKDH (229 aa)). Cys-87 acts as the Nucleophile in catalysis. Active-site residues include His-200 and Glu-202.

In terms of assembly, part of the FGAM synthase complex composed of 1 PurL, 1 PurQ and 2 PurS subunits.

It is found in the cytoplasm. It carries out the reaction N(2)-formyl-N(1)-(5-phospho-beta-D-ribosyl)glycinamide + L-glutamine + ATP + H2O = 2-formamido-N(1)-(5-O-phospho-beta-D-ribosyl)acetamidine + L-glutamate + ADP + phosphate + H(+). It catalyses the reaction L-glutamine + H2O = L-glutamate + NH4(+). Its pathway is purine metabolism; IMP biosynthesis via de novo pathway; 5-amino-1-(5-phospho-D-ribosyl)imidazole from N(2)-formyl-N(1)-(5-phospho-D-ribosyl)glycinamide: step 1/2. Functionally, part of the phosphoribosylformylglycinamidine synthase complex involved in the purines biosynthetic pathway. Catalyzes the ATP-dependent conversion of formylglycinamide ribonucleotide (FGAR) and glutamine to yield formylglycinamidine ribonucleotide (FGAM) and glutamate. The FGAM synthase complex is composed of three subunits. PurQ produces an ammonia molecule by converting glutamine to glutamate. PurL transfers the ammonia molecule to FGAR to form FGAM in an ATP-dependent manner. PurS interacts with PurQ and PurL and is thought to assist in the transfer of the ammonia molecule from PurQ to PurL. This Pseudothermotoga lettingae (strain ATCC BAA-301 / DSM 14385 / NBRC 107922 / TMO) (Thermotoga lettingae) protein is Phosphoribosylformylglycinamidine synthase subunit PurQ.